The primary structure comprises 55 residues: Bowman-Birk type proteinase inhibitor B1 (55 aa).

Disulfide bonds link Cys-6-Cys-53, Cys-12-Cys-17, Cys-26-Cys-33, and Cys-30-Cys-45.

Belongs to the Bowman-Birk serine protease inhibitor family. In terms of tissue distribution, expressed in bulb (at protein level).

In terms of biological role, serine protease inhibitor. Weakly inhibits trypsin (Ki = 167 nM). Does not inhibit bacterial subtilisin or mamallian chymotrypsin. This chain is Bowman-Birk type proteinase inhibitor B1, found in Hyacinthus orientalis (Common hyacinth).